The chain runs to 445 residues: Trigger factor (445 aa).

The 86-residue stretch at 162 to 247 folds into the PPIase FKBP-type domain; it reads GDQVTIDAIG…IKAVHTAEPT (86 aa).

This sequence belongs to the FKBP-type PPIase family. Tig subfamily.

It localises to the cytoplasm. The catalysed reaction is [protein]-peptidylproline (omega=180) = [protein]-peptidylproline (omega=0). Its function is as follows. Involved in protein export. Acts as a chaperone by maintaining the newly synthesized protein in an open conformation. Functions as a peptidyl-prolyl cis-trans isomerase. This chain is Trigger factor, found in Rickettsia peacockii (strain Rustic).